The chain runs to 788 residues: Response regulator SSK1 (788 aa).

The Response regulatory domain maps to 534 to 691; it reads NVLIVEDNII…WLERKVKEWG (158 aa). The residue at position 583 (Asp-583) is a 4-aspartylphosphate.

This sequence belongs to the SSK1 family.

The protein localises to the cytoplasm. Two-domain response regulator protein in the two-component signal transduction system of the HOG1 pathway. Controls high-osmolarity adaptation and fungicide sensitivity via its regulation of the phosphorylation of HOG1. This Cochliobolus heterostrophus (strain C5 / ATCC 48332 / race O) (Southern corn leaf blight fungus) protein is Response regulator SSK1.